Reading from the N-terminus, the 669-residue chain is Methionine--tRNA ligase (669 aa).

The 'HIGH' region signature appears at 14–24; it reads YYPSGKLHIGN. A Zn(2+)-binding site is contributed by H161. The 'KMSKS' region motif lies at 309-313; it reads KMSKS. K312 serves as a coordination point for ATP. The tRNA-binding domain maps to 566-669; sequence DFDKVELKVA…KEMPNGAGIA (104 aa).

The protein belongs to the class-I aminoacyl-tRNA synthetase family. MetG type 2B subfamily. Homodimer.

The protein resides in the cytoplasm. It carries out the reaction tRNA(Met) + L-methionine + ATP = L-methionyl-tRNA(Met) + AMP + diphosphate. Its function is as follows. Is required not only for elongation of protein synthesis but also for the initiation of all mRNA translation through initiator tRNA(fMet) aminoacylation. In Enterococcus faecalis (strain ATCC 700802 / V583), this protein is Methionine--tRNA ligase.